Reading from the N-terminus, the 437-residue chain is Bystin (437 aa).

Residues 1–105 (MPKFKAARGV…DGSDDEDEEW (105 aa)) are disordered. At R40 the chain carries Omega-N-methylarginine. S55 carries the post-translational modification Phosphoserine. Residues 71-87 (AEHGTGDKPAAPRERTT) show a composition bias toward basic and acidic residues. Residue S98 is modified to Phosphoserine. T156 carries the phosphothreonine modification. S167 and S414 each carry phosphoserine.

It belongs to the bystin family. As to quaternary structure, binds trophinin, tastin and cytokeratins. In terms of tissue distribution, found in the placenta from the sixth week of pregnancy. Was localized in the cytoplasm of the syncytiotrophoblast in the chorionic villi and in endometrial decidual cells at the uteroplacental interface. After week 10, the level decreased and then disappeared from placental villi.

Its subcellular location is the cytoplasm. It localises to the nucleus. The protein localises to the nucleolus. In terms of biological role, required for processing of 20S pre-rRNA precursor and biogenesis of 40S ribosomal subunits. May be required for trophinin-dependent regulation of cell adhesion during implantation of human embryos. The polypeptide is Bystin (Homo sapiens (Human)).